Here is a 549-residue protein sequence, read N- to C-terminus: MAAKDVKFSRDARERMLRGVNILADAVKVTLGPKGRNVVIDKSFGAPRITKDGVTVAKEIELEDKFENMGAQMVREVASKTNDIAGDGTTTATVLAQSIVQEGHKAVAAGMNPMDLKRGIDLAVADVVATLIKNAKKIKTSEEVAQVGTIAGNGDSSVGSMIAEAMQKVGNEGVITVEEAKTAETELEVVEGMQFDRGYLSPYFVTNADKMVADLEDAYILLHEKKLSNLQAMLPILEAVVQTSKPLVIISEDVEGEALATLVVNKLRGGLKIAAVKAPGFGDRRKAMLEDIAILTGGQVISEDLGIKLENVGLNMLGRAKKVSISKENTTIVDGAGKKAEIQGRVAQIKQQIEETTSDYDKEKLQERLAKLAGGVAVIRVGGATEVEVKEKKDRVDDALNATRAAVEEGIVPGGGVALLRASLSINAVGANSDQTAGISIVRRALQAPARQIAANAGAEASIVAGKILENKGATYGYNAQTGEYGDMIAMGIVDPVKVVRTALQDAASVAGLLVTAEAMIAEAPKKESAGGGMPGGMPGGGMGGMGGF.

Residues 30–33, Lys-51, 87–91, Gly-415, and Asp-495 each bind ATP; these read TLGP and DGTTT.

Belongs to the chaperonin (HSP60) family. As to quaternary structure, forms a cylinder of 14 subunits composed of two heptameric rings stacked back-to-back. Interacts with the co-chaperonin GroES.

It is found in the cytoplasm. It catalyses the reaction ATP + H2O + a folded polypeptide = ADP + phosphate + an unfolded polypeptide.. In terms of biological role, together with its co-chaperonin GroES, plays an essential role in assisting protein folding. The GroEL-GroES system forms a nano-cage that allows encapsulation of the non-native substrate proteins and provides a physical environment optimized to promote and accelerate protein folding. The polypeptide is Chaperonin GroEL 5 (Mesorhizobium japonicum (strain LMG 29417 / CECT 9101 / MAFF 303099) (Mesorhizobium loti (strain MAFF 303099))).